The chain runs to 146 residues: 2S sulfur-rich seed storage protein 1 (146 aa).

The N-terminal stretch at 1–22 (MAKISVAAAALLVLMALGHATA) is a signal peptide. Residues 23 to 36 (FRATVTTTVVEEEN) constitute a propeptide that is removed on maturation. Residue Gln37 is modified to Pyrrolidone carboxylic acid. Cystine bridges form between Cys40–Cys92, Cys53–Cys81, Cys82–Cys130, and Cys94–Cys137. A propeptide spanning residues 65 to 69 (PYQTM) is cleaved from the precursor. A propeptide spanning residues 143-146 (IAGF) is cleaved from the precursor.

This sequence belongs to the 2S seed storage albumins family. As to quaternary structure, the mature protein consists of a small and a large chain linked by disulfide bonds.

In terms of biological role, this is a 2S seed storage protein. This chain is 2S sulfur-rich seed storage protein 1 (BE2S1), found in Bertholletia excelsa (Brazil nut).